We begin with the raw amino-acid sequence, 570 residues long: Sulfite reductase [NADPH] hemoprotein beta-component (570 aa).

[4Fe-4S] cluster contacts are provided by C434, C440, C479, and C483. C483 contributes to the siroheme binding site.

The protein belongs to the nitrite and sulfite reductase 4Fe-4S domain family. Alpha(8)-beta(8). The alpha component is a flavoprotein, the beta component is a hemoprotein. Siroheme serves as cofactor. Requires [4Fe-4S] cluster as cofactor.

The catalysed reaction is hydrogen sulfide + 3 NADP(+) + 3 H2O = sulfite + 3 NADPH + 4 H(+). It participates in sulfur metabolism; hydrogen sulfide biosynthesis; hydrogen sulfide from sulfite (NADPH route): step 1/1. In terms of biological role, component of the sulfite reductase complex that catalyzes the 6-electron reduction of sulfite to sulfide. This is one of several activities required for the biosynthesis of L-cysteine from sulfate. The protein is Sulfite reductase [NADPH] hemoprotein beta-component of Escherichia coli O6:H1 (strain CFT073 / ATCC 700928 / UPEC).